We begin with the raw amino-acid sequence, 193 residues long: Dual-action ribosomal maturation protein DarP (193 aa).

Over residues 1 to 10 the composition is skewed to basic and acidic residues; that stretch reads MRGRDEDTGE. 2 disordered regions span residues 1–20 and 171–193; these read MRGRDEDTGEFRGASRSQQR and QEQGLESGDSGLEDGESALEDDE. Acidic residues predominate over residues 181–193; it reads GLEDGESALEDDE.

Belongs to the DarP family.

Its subcellular location is the cytoplasm. In terms of biological role, member of a network of 50S ribosomal subunit biogenesis factors which assembles along the 30S-50S interface, preventing incorrect 23S rRNA structures from forming. Promotes peptidyl transferase center (PTC) maturation. In Xanthomonas oryzae pv. oryzae (strain MAFF 311018), this protein is Dual-action ribosomal maturation protein DarP.